The following is a 679-amino-acid chain: Glycine--tRNA ligase beta subunit (679 aa).

This sequence belongs to the class-II aminoacyl-tRNA synthetase family. In terms of assembly, tetramer of two alpha and two beta subunits.

The protein resides in the cytoplasm. The enzyme catalyses tRNA(Gly) + glycine + ATP = glycyl-tRNA(Gly) + AMP + diphosphate. The polypeptide is Glycine--tRNA ligase beta subunit (Streptococcus pyogenes serotype M18 (strain MGAS8232)).